Reading from the N-terminus, the 361-residue chain is Porphobilinogen deaminase (361 aa).

N-acetylserine is present on serine 2. Residue serine 69 is modified to Phosphoserine. Lysine 74 is subject to N6-acetyllysine. Serine 147 carries the post-translational modification Phosphoserine. Cysteine 261 carries the post-translational modification S-(dipyrrolylmethanemethyl)cysteine.

The protein belongs to the HMBS family. Monomer. It depends on dipyrromethane as a cofactor.

Its subcellular location is the cytoplasm. It localises to the cytosol. It catalyses the reaction 4 porphobilinogen + H2O = hydroxymethylbilane + 4 NH4(+). It participates in porphyrin-containing compound metabolism; protoporphyrin-IX biosynthesis; coproporphyrinogen-III from 5-aminolevulinate: step 2/4. Functionally, as part of the heme biosynthetic pathway, catalyzes the sequential polymerization of four molecules of porphobilinogen to form hydroxymethylbilane, also known as preuroporphyrinogen. Catalysis begins with the assembly of the dipyrromethane cofactor by the apoenzyme from two molecules of porphobilinogen or from preuroporphyrinogen. The covalently linked cofactor acts as a primer, around which the tetrapyrrole product is assembled. In the last step of catalysis, the product, preuroporphyrinogen, is released, leaving the cofactor bound to the holodeaminase intact. The protein is Porphobilinogen deaminase (HMBS) of Bos taurus (Bovine).